The primary structure comprises 762 residues: Polyadenylate-binding protein, cytoplasmic and nuclear (762 aa).

The interval 39-58 is disordered; sequence TGEEIDTAGPTPSSAAPHPQ. The span at 48 to 58 shows a compositional bias: low complexity; it reads PTPSSAAPHPQ. RRM domains lie at 61-139, 149-226, 242-320, and 346-470; these read ASLY…WSQR, GNVF…HHIP, TNIY…RAQK, and VNLY…LAQR. 3 disordered regions span residues 376-429, 596-663, and 740-762; these read KVMR…KSKL, SALA…AGAP, and VRQQ…EEKA. Residues 389–425 show a composition bias toward basic and acidic residues; it reads GESKEGEESEKNKENKPEEKEGDDSKPEEKEGEDSKS. Positions 600–612 are enriched in gly residues; the sequence is GGRGGPAGRGPMQ. The segment covering 645–663 has biased composition (low complexity); that stretch reads AAGRAPAGAPAGARGAGAP. Positions 664 to 741 constitute a PABC domain; the sequence is EGLQGQLAAV…ALAVYDDYVR (78 aa). Residues 753–762 are compositionally biased toward basic and acidic residues; sequence SKEEKTEEKA.

This sequence belongs to the polyadenylate-binding protein type-1 family.

The protein localises to the cytoplasm. It is found in the nucleus. Its function is as follows. Binds the poly(A) tail of mRNA. Appears to be an important mediator of the multiple roles of the poly(A) tail in mRNA biogenesis, stability and translation. In the nucleus, involved in both mRNA cleavage and polyadenylation. Is also required for efficient mRNA export to the cytoplasm. Acts in concert with a poly(A)-specific nuclease (PAN) to affect poly(A) tail shortening, which may occur concomitantly with either nucleocytoplasmic mRNA transport or translational initiation. In the cytoplasm, stimulates translation initiation and regulates mRNA decay through translation termination-coupled poly(A) shortening, probably mediated by PAN. The chain is Polyadenylate-binding protein, cytoplasmic and nuclear (PAB1) from Pyricularia oryzae (strain 70-15 / ATCC MYA-4617 / FGSC 8958) (Rice blast fungus).